Consider the following 348-residue polypeptide: Large ribosomal subunit protein uL3m (348 aa).

Residues 1–40 (MPGWRLLAWAGARVLDRGTGGLGTALGSGNRTDICVLVRS) constitute a mitochondrion transit peptide.

Belongs to the universal ribosomal protein uL3 family. Component of the mitochondrial ribosome large subunit (39S) which comprises a 16S rRNA and about 50 distinct proteins.

It localises to the mitochondrion. The chain is Large ribosomal subunit protein uL3m (MRPL3) from Bos taurus (Bovine).